Reading from the N-terminus, the 206-residue chain is Inner membrane protein YnjF (206 aa).

The Periplasmic segment spans residues 1-37 (MLDRHLHPRIKPLLHQCVRVLDKPGITPDGLTLVGFA). Residues 38–60 (IGVLALPFLALGWYLAALVVILL) traverse the membrane as a helical segment. Residues 61-79 (NRLLDGLDGALARRRELTD) lie on the Cytoplasmic side of the membrane. Residues 80 to 102 (AGGFLDISLDFLFYALVPFGFIL) traverse the membrane as a helical segment. Residues 103–111 (AAPEQNALA) lie on the Periplasmic side of the membrane. The helical transmembrane segment at 112–134 (GGWLLFAFIGTGSSFLAFAALAA) threads the bilayer. The Cytoplasmic portion of the chain corresponds to 135–146 (KHQIDNPGYAHK). A helical transmembrane segment spans residues 147-169 (SFYYLGGLTEGTETILLFVLGCL). Over 170-173 (FPAW) the chain is Periplasmic. A helical transmembrane segment spans residues 174–196 (FAWFAWIFGALCWMTTFTRVWSG). Residues 197–206 (YLTLKSLQRQ) lie on the Cytoplasmic side of the membrane.

It belongs to the CDP-alcohol phosphatidyltransferase class-I family.

The protein resides in the cell inner membrane. This chain is Inner membrane protein YnjF (ynjF), found in Escherichia coli (strain K12).